Consider the following 534-residue polypeptide: GTPase Obg (534 aa).

The 158-residue stretch at 2-159 folds into the Obg domain; the sequence is ASFVDRVVLH…SDIVLELKSI (158 aa). A disordered region spans residues 63–82; it reads APHRHASNGGQGMGDWRGGK. Positions 71 to 82 are enriched in gly residues; the sequence is GGQGMGDWRGGK. One can recognise an OBG-type G domain in the interval 160–343; that stretch reads ADIALVGFPS…LSFAMAELVT (184 aa). GTP contacts are provided by residues 166-173, 191-195, 212-215, 295-298, and 324-326; these read GFPSAGKS, FTTLI, DVPG, NKID, and SAS. Mg(2+)-binding residues include Ser-173 and Thr-193. The 87-residue stretch at 363-449 folds into the OCT domain; that stretch reads PRAVNRKEFT…ENAVVFDWEP (87 aa). The segment at 456–534 is disordered; the sequence is ELLSGPRGTD…AASTDDGDAL (79 aa). 2 stretches are compositionally biased toward basic and acidic residues: residues 464-504 and 512-526; these read TDPR…ERKA and SARRDREAHESREAA.

The protein belongs to the TRAFAC class OBG-HflX-like GTPase superfamily. OBG GTPase family. Monomer. The cofactor is Mg(2+).

The protein resides in the cytoplasm. An essential GTPase which binds GTP, GDP and possibly (p)ppGpp with moderate affinity, with high nucleotide exchange rates and a fairly low GTP hydrolysis rate. Plays a role in control of the cell cycle, stress response, ribosome biogenesis and in those bacteria that undergo differentiation, in morphogenesis control. The sequence is that of GTPase Obg from Renibacterium salmoninarum (strain ATCC 33209 / DSM 20767 / JCM 11484 / NBRC 15589 / NCIMB 2235).